Reading from the N-terminus, the 185-residue chain is Dual specificity protein phosphatase 3 (185 aa).

The region spanning glutamine 28–lysine 179 is the Tyrosine-protein phosphatase domain. Residue cysteine 124 is the Phosphocysteine intermediate of the active site.

This sequence belongs to the protein-tyrosine phosphatase family. Non-receptor class dual specificity subfamily. Microtubule inner protein component of sperm flagellar doublet microtubules. Interacts with VRK3; this interaction activates DUSP3 phosphatase activity.

The protein resides in the nucleus. It localises to the cytoplasm. Its subcellular location is the cytoskeleton. It is found in the flagellum axoneme. The enzyme catalyses O-phospho-L-tyrosyl-[protein] + H2O = L-tyrosyl-[protein] + phosphate. The catalysed reaction is O-phospho-L-seryl-[protein] + H2O = L-seryl-[protein] + phosphate. It carries out the reaction O-phospho-L-threonyl-[protein] + H2O = L-threonyl-[protein] + phosphate. In terms of biological role, shows activity both for tyrosine-protein phosphate and serine-protein phosphate, but displays a strong preference toward phosphotyrosines. Specifically dephosphorylates and inactivates ERK1 and ERK2. The sequence is that of Dual specificity protein phosphatase 3 (DUSP3) from Homo sapiens (Human).